The following is a 198-amino-acid chain: Guanylate kinase (198 aa).

The region spanning 4–186 is the Guanylate kinase-like domain; it reads PRPVVLSGPS…AYATLKQALS (183 aa). Residue 14–19 participates in ATP binding; that stretch reads GAGKST. 37 to 51 is a substrate binding site; sequence SHTTRNPRPGEEDGK. Residues Arg-44, Arg-137, and Arg-148 contribute to the active site. Residue 171 to 172 participates in ATP binding; that stretch reads ND.

The protein belongs to the guanylate kinase family. In terms of assembly, monomer. Interacts with RD3. As to expression, widely expressed. In retina is expressed in inner segment, outer nuclear layer, outer plexiform layer, inner plexiform layer, and ganglion cell layer (at protein level).

It localises to the photoreceptor inner segment. It is found in the cytoplasm. The protein resides in the cytosol. The protein localises to the mitochondrion. The catalysed reaction is GMP + ATP = GDP + ADP. Its function is as follows. Catalyzes the phosphorylation of GMP to GDP. Essential enzyme for recycling GMP and indirectly, cyclic GMP (cGMP). Involved in the cGMP metabolism in photoreceptors. The chain is Guanylate kinase from Mus musculus (Mouse).